Here is an 883-residue protein sequence, read N- to C-terminus: MEKLSANKIRQLWIDFFREKNHFFIESKPLVPQNDDSLLWINSGVATLKDYFTGKKIPPSKRLVNSQKALRTNDIENVGLTSRHHTLFEMLGNFSIGDYFKTEAIDYAYEFLTKKLKLDPKNLFITYYDGDDITFEKWKSLGFSNEKLIKGSRKTNFWDLGQGPCGPCSEIYFDRGPKFDSRGSELIKNEIENDRFIEIWNIVFSEFNNDGQQNYTPLKSKNIDTGAGFERIVSILQDGPTNYDTDLFLPIIAEIEKSTVFQYKIENYFLKEPRQTQINKSFRIIADHIRAITLAINDGVQPSNLHRGYIIRRLIRRAYWNGKKLGISHPFLYKLVEIVGKTLDYRFDIQTISKIILNEEENFAKTLEIGYNLLESQLKINKNQIKPVTVFKLFETYGFPVELTKEILAEKNIDFDLSQLVEFQEKHSQISRAKKTTGMQKVINSLTQIKAKISDFIGYHTHHIETKISFLANKDEEVAETNGENLSYVIFEKTPFYATAGGQKHDQGWIIQNNSTIEILDVFKDKFLNNIHVFKGKIVKNQPVFLKLDTKNRLNLERNHSGTHLLFASLRQEFGSEIKQLGSDNNENRLTFDFPLNRKPSDQEIKSVENRINSYINQKIKRKYLVTNLEEAQKLNAIMTLEESEYMDPNSLRLVIFDKITTDLCGGTHIENTELLEKFTILSCQSKGSGIYRIRAVTSWNKYFEFLKGKIQEILSKISALKNKIKKIEPNFGLNLPNLVDLEQQFDYLKKIEDDLKIYYKKLLKSQLRIVKSELDANKIIEIGKFSFYLDFNLPLHNLKQIAATWREQNPRISFILGANLVNNEFLIIVSSAILASNQILEKILEIFTGSGGGNYKIAQGKIQKKPEKEVFIKLLWENITEF.

Zn(2+)-binding residues include H560, H564, C665, and H669.

The protein belongs to the class-II aminoacyl-tRNA synthetase family. The cofactor is Zn(2+).

It localises to the cytoplasm. It catalyses the reaction tRNA(Ala) + L-alanine + ATP = L-alanyl-tRNA(Ala) + AMP + diphosphate. Catalyzes the attachment of alanine to tRNA(Ala) in a two-step reaction: alanine is first activated by ATP to form Ala-AMP and then transferred to the acceptor end of tRNA(Ala). Also edits incorrectly charged Ser-tRNA(Ala) and Gly-tRNA(Ala) via its editing domain. The chain is Alanine--tRNA ligase from Mesomycoplasma hyopneumoniae (strain 7448) (Mycoplasma hyopneumoniae).